We begin with the raw amino-acid sequence, 600 residues long: Elongation factor 4 (600 aa).

The tr-type G domain occupies 5–187 (KYIRNFSIIA…AIINKLPSPK (183 aa)). GTP is bound by residues 17 to 22 (DHGKST) and 134 to 137 (NKID).

This sequence belongs to the TRAFAC class translation factor GTPase superfamily. Classic translation factor GTPase family. LepA subfamily.

The protein localises to the cell inner membrane. The catalysed reaction is GTP + H2O = GDP + phosphate + H(+). Its function is as follows. Required for accurate and efficient protein synthesis under certain stress conditions. May act as a fidelity factor of the translation reaction, by catalyzing a one-codon backward translocation of tRNAs on improperly translocated ribosomes. Back-translocation proceeds from a post-translocation (POST) complex to a pre-translocation (PRE) complex, thus giving elongation factor G a second chance to translocate the tRNAs correctly. Binds to ribosomes in a GTP-dependent manner. The chain is Elongation factor 4 from Rickettsia typhi (strain ATCC VR-144 / Wilmington).